Reading from the N-terminus, the 513-residue chain is Light-independent protochlorophyllide reductase subunit B (513 aa).

Residue Asp-36 participates in [4Fe-4S] cluster binding. Asp-274 (proton donor) is an active-site residue. Position 409–410 (409–410 (GL)) interacts with substrate. The tract at residues 426 to 457 (DAAGPSHHGGHSPKPQAAEPAPQAAPQPENTG) is disordered. The span at 440–454 (PQAAEPAPQAAPQPE) shows a compositional bias: low complexity.

The protein belongs to the ChlB/BchB/BchZ family. Protochlorophyllide reductase is composed of three subunits; BchL, BchN and BchB. Forms a heterotetramer of two BchB and two BchN subunits. [4Fe-4S] cluster serves as cofactor.

The enzyme catalyses chlorophyllide a + oxidized 2[4Fe-4S]-[ferredoxin] + 2 ADP + 2 phosphate = protochlorophyllide a + reduced 2[4Fe-4S]-[ferredoxin] + 2 ATP + 2 H2O. It participates in porphyrin-containing compound metabolism; bacteriochlorophyll biosynthesis (light-independent). Functionally, component of the dark-operative protochlorophyllide reductase (DPOR) that uses Mg-ATP and reduced ferredoxin to reduce ring D of protochlorophyllide (Pchlide) to form chlorophyllide a (Chlide). This reaction is light-independent. The NB-protein (BchN-BchB) is the catalytic component of the complex. The protein is Light-independent protochlorophyllide reductase subunit B of Roseobacter denitrificans (strain ATCC 33942 / OCh 114) (Erythrobacter sp. (strain OCh 114)).